The sequence spans 120 residues: Large ribosomal subunit protein uL18 (120 aa).

This sequence belongs to the universal ribosomal protein uL18 family. In terms of assembly, part of the 50S ribosomal subunit; part of the 5S rRNA/L5/L18/L25 subcomplex. Contacts the 5S and 23S rRNAs.

This is one of the proteins that bind and probably mediate the attachment of the 5S RNA into the large ribosomal subunit, where it forms part of the central protuberance. This Gluconobacter oxydans (strain 621H) (Gluconobacter suboxydans) protein is Large ribosomal subunit protein uL18.